Here is a 214-residue protein sequence, read N- to C-terminus: Outer-membrane lipoprotein LolB (214 aa).

An N-terminal signal peptide occupies residues 1 to 25 (MNNLKRFTKSIFSCIALSGLLFLGG). The N-palmitoyl cysteine moiety is linked to residue C26. The S-diacylglycerol cysteine moiety is linked to residue C26.

It belongs to the LolB family. Monomer.

Its subcellular location is the cell outer membrane. In terms of biological role, plays a critical role in the incorporation of lipoproteins in the outer membrane after they are released by the LolA protein. This chain is Outer-membrane lipoprotein LolB, found in Shewanella sp. (strain MR-4).